We begin with the raw amino-acid sequence, 523 residues long: 2-isopropylmalate synthase (523 aa).

The Pyruvate carboxyltransferase domain occupies 5 to 267; sequence VIIFDTTLRD…ETGINAKEIH (263 aa). 4 residues coordinate Mn(2+): aspartate 14, histidine 202, histidine 204, and asparagine 238. Positions 392-523 are regulatory domain; sequence KLAQLVVHSD…QKDRSELGGV (132 aa).

Belongs to the alpha-IPM synthase/homocitrate synthase family. LeuA type 1 subfamily. In terms of assembly, homodimer. The cofactor is Mn(2+).

It localises to the cytoplasm. The enzyme catalyses 3-methyl-2-oxobutanoate + acetyl-CoA + H2O = (2S)-2-isopropylmalate + CoA + H(+). It functions in the pathway amino-acid biosynthesis; L-leucine biosynthesis; L-leucine from 3-methyl-2-oxobutanoate: step 1/4. Its function is as follows. Catalyzes the condensation of the acetyl group of acetyl-CoA with 3-methyl-2-oxobutanoate (2-ketoisovalerate) to form 3-carboxy-3-hydroxy-4-methylpentanoate (2-isopropylmalate). The protein is 2-isopropylmalate synthase of Shewanella sediminis (strain HAW-EB3).